The primary structure comprises 262 residues: Acyl-[acyl-carrier-protein]--UDP-N-acetylglucosamine O-acyltransferase (262 aa).

It belongs to the transferase hexapeptide repeat family. LpxA subfamily. Homotrimer.

The protein localises to the cytoplasm. The catalysed reaction is a (3R)-hydroxyacyl-[ACP] + UDP-N-acetyl-alpha-D-glucosamine = a UDP-3-O-[(3R)-3-hydroxyacyl]-N-acetyl-alpha-D-glucosamine + holo-[ACP]. It participates in glycolipid biosynthesis; lipid IV(A) biosynthesis; lipid IV(A) from (3R)-3-hydroxytetradecanoyl-[acyl-carrier-protein] and UDP-N-acetyl-alpha-D-glucosamine: step 1/6. Involved in the biosynthesis of lipid A, a phosphorylated glycolipid that anchors the lipopolysaccharide to the outer membrane of the cell. The chain is Acyl-[acyl-carrier-protein]--UDP-N-acetylglucosamine O-acyltransferase from Pectobacterium atrosepticum (strain SCRI 1043 / ATCC BAA-672) (Erwinia carotovora subsp. atroseptica).